The chain runs to 247 residues: Carboxy-S-adenosyl-L-methionine synthase (247 aa).

Residues Y40, 65-67 (GAS), 90-91 (DN), 122-123 (DI), N137, and R204 each bind S-adenosyl-L-methionine.

This sequence belongs to the class I-like SAM-binding methyltransferase superfamily. Cx-SAM synthase family. In terms of assembly, homodimer.

It catalyses the reaction prephenate + S-adenosyl-L-methionine = carboxy-S-adenosyl-L-methionine + 3-phenylpyruvate + H2O. Functionally, catalyzes the conversion of S-adenosyl-L-methionine (SAM) to carboxy-S-adenosyl-L-methionine (Cx-SAM). In Pseudomonas putida (strain ATCC 47054 / DSM 6125 / CFBP 8728 / NCIMB 11950 / KT2440), this protein is Carboxy-S-adenosyl-L-methionine synthase.